Consider the following 814-residue polypeptide: DNA gyrase subunit A (814 aa).

A Topo IIA-type catalytic domain is found at 32–499; that stretch reads LPDVRDGLKP…GVIEFREEDL (468 aa). The O-(5'-phospho-DNA)-tyrosine intermediate role is filled by Tyr-120. Residues 526–532 carry the GyrA-box motif; the sequence is QHRAGRG.

It belongs to the type II topoisomerase GyrA/ParC subunit family. In terms of assembly, heterotetramer, composed of two GyrA and two GyrB chains. In the heterotetramer, GyrA contains the active site tyrosine that forms a transient covalent intermediate with DNA, while GyrB binds cofactors and catalyzes ATP hydrolysis.

Its subcellular location is the cytoplasm. The enzyme catalyses ATP-dependent breakage, passage and rejoining of double-stranded DNA.. Functionally, a type II topoisomerase that negatively supercoils closed circular double-stranded (ds) DNA in an ATP-dependent manner to modulate DNA topology and maintain chromosomes in an underwound state. Negative supercoiling favors strand separation, and DNA replication, transcription, recombination and repair, all of which involve strand separation. Also able to catalyze the interconversion of other topological isomers of dsDNA rings, including catenanes and knotted rings. Type II topoisomerases break and join 2 DNA strands simultaneously in an ATP-dependent manner. The sequence is that of DNA gyrase subunit A from Dehalogenimonas lykanthroporepellens (strain ATCC BAA-1523 / JCM 15061 / BL-DC-9).